The primary structure comprises 209 residues: Interleukin-6 (209 aa).

Residues 1-26 (RFTSAFSPVAFSLGLLLVMATAFPTP) form the signal peptide. Positions 28–47 (PVGGESQADATSNRPPLTSP) are disordered. Cys-69 and Cys-75 form a disulfide bridge. Ser-78 carries the phosphoserine modification. An intrachain disulfide couples Cys-98 to Cys-108.

It belongs to the IL-6 superfamily. In terms of assembly, component of a hexamer of two molecules each of IL6, IL6R and IL6ST; first binds to IL6R to associate with the signaling subunit IL6ST. Interacts with IL6R (via the N-terminal ectodomain); this interaction may be affected by IL6R-binding with SORL1, hence decreasing IL6 cis signaling. Interacts with SORL1 (via the N-terminal ectodomain); this interaction leads to IL6 internalization and lysosomal degradation. May form a trimeric complex with the soluble SORL1 ectodomain and soluble IL6R receptor; this interaction might stabilize circulating IL6, hence promoting IL6 trans signaling.

Its subcellular location is the secreted. In terms of biological role, cytokine with a wide variety of biological functions in immunity, tissue regeneration, and metabolism. Binds to IL6R, then the complex associates to the signaling subunit IL6ST/gp130 to trigger the intracellular IL6-signaling pathway. The interaction with the membrane-bound IL6R and IL6ST stimulates 'classic signaling', whereas the binding of IL6 and soluble IL6R to IL6ST stimulates 'trans-signaling'. Alternatively, 'cluster signaling' occurs when membrane-bound IL6:IL6R complexes on transmitter cells activate IL6ST receptors on neighboring receiver cells. Its function is as follows. IL6 is a potent inducer of the acute phase response. Rapid production of IL6 contributes to host defense during infection and tissue injury, but excessive IL6 synthesis is involved in disease pathology. In the innate immune response, is synthesized by myeloid cells, such as macrophages and dendritic cells, upon recognition of pathogens through toll-like receptors (TLRs) at the site of infection or tissue injury. In the adaptive immune response, is required for the differentiation of B cells into immunoglobulin-secreting cells. Plays a major role in the differentiation of CD4(+) T cell subsets. Essential factor for the development of T follicular helper (Tfh) cells that are required for the induction of germinal-center formation. Required to drive naive CD4(+) T cells to the Th17 lineage. Also required for proliferation of myeloma cells and the survival of plasmablast cells. Functionally, acts as an essential factor in bone homeostasis and on vessels directly or indirectly by induction of VEGF, resulting in increased angiogenesis activity and vascular permeability. Induces, through 'trans-signaling' and synergistically with IL1B and TNF, the production of VEGF. Involved in metabolic controls, is discharged into the bloodstream after muscle contraction increasing lipolysis and improving insulin resistance. 'Trans-signaling' in central nervous system also regulates energy and glucose homeostasis. Mediates, through GLP-1, crosstalk between insulin-sensitive tissues, intestinal L cells and pancreatic islets to adapt to changes in insulin demand. Also acts as a myokine. Plays a protective role during liver injury, being required for maintenance of tissue regeneration. Also has a pivotal role in iron metabolism by regulating HAMP/hepcidin expression upon inflammation or bacterial infection. Through activation of IL6ST-YAP-NOTCH pathway, induces inflammation-induced epithelial regeneration. The protein is Interleukin-6 (IL6) of Phoca vitulina (Harbor seal).